The chain runs to 387 residues: tRNA pseudouridine synthase B (387 aa).

D43 acts as the Nucleophile in catalysis.

Belongs to the pseudouridine synthase TruB family. Type 1 subfamily.

It catalyses the reaction uridine(55) in tRNA = pseudouridine(55) in tRNA. In terms of biological role, responsible for synthesis of pseudouridine from uracil-55 in the psi GC loop of transfer RNAs. The chain is tRNA pseudouridine synthase B from Bifidobacterium longum subsp. infantis (strain ATCC 15697 / DSM 20088 / JCM 1222 / NCTC 11817 / S12).